A 208-amino-acid chain; its full sequence is Protein-L-isoaspartate O-methyltransferase (208 aa).

Residue Ser-59 is part of the active site.

This sequence belongs to the methyltransferase superfamily. L-isoaspartyl/D-aspartyl protein methyltransferase family.

It localises to the cytoplasm. It carries out the reaction [protein]-L-isoaspartate + S-adenosyl-L-methionine = [protein]-L-isoaspartate alpha-methyl ester + S-adenosyl-L-homocysteine. Its function is as follows. Catalyzes the methyl esterification of L-isoaspartyl residues in peptides and proteins that result from spontaneous decomposition of normal L-aspartyl and L-asparaginyl residues. It plays a role in the repair and/or degradation of damaged proteins. The polypeptide is Protein-L-isoaspartate O-methyltransferase (Aliivibrio salmonicida (strain LFI1238) (Vibrio salmonicida (strain LFI1238))).